The primary structure comprises 761 residues: Putative pentatricopeptide repeat-containing protein At2g02150 (761 aa).

17 PPR repeats span residues 141–175 (SVESYCIVAHILFCARMYYDANSVLKEMVLSKADC), 191–225 (GFGVFDALFSVLIDLGMLEEAIQCFSKMKRFRVFP), 226–260 (KTRSCNGLLHRFAKLGKTDDVKRFFKDMIGAGARP), 261–295 (TVFTYNIMIDCMCKEGDVEAARGLFEEMKFRGLVP), 296–330 (DTVTYNSMIDGFGKVGRLDDTVCFFEEMKDMCCEP), 331–365 (DVITYNALINCFCKFGKLPIGLEFYREMKGNGLKP), 366–400 (NVVSYSTLVDAFCKEGMMQQAIKFYVDMRRVGLVP), 401–435 (NEYTYTSLIDANCKIGNLSDAFRLGNEMLQVGVEW), 436–470 (NVVTYTALIDGLCDAERMKEAEELFGKMDTAGVIP), 471–505 (NLASYNALIHGFVKAKNMDRALELLNELKGRGIKP), 506–540 (DLLLYGTFIWGLCSLEKIEAAKVVMNEMKECGIKA), 541–575 (NSLIYTTLMDAYFKSGNPTEGLHLLDEMKELDIEV), 576–606 (TVVTFCVLIDGLCKNKLVSKAVDYFNRISND), 612–646 (NAAIFTAMIDGLCKDNQVEAATTLFEQMVQKGLVP), 647–681 (DRTAYTSLMDGNFKQGNVLEALALRDKMAEIGMKL), 682–716 (DLLAYTSLVWGLSHCNQLQKARSFLEEMIGEGIHP), and 717–751 (DEVLCISVLKKHYELGCIDEAVELQSYLMKHQLLT).

This sequence belongs to the PPR family. P subfamily.

This Arabidopsis thaliana (Mouse-ear cress) protein is Putative pentatricopeptide repeat-containing protein At2g02150.